The chain runs to 181 residues: Minor capsid protein P4 (181 aa).

In terms of assembly, interacts with the major capsid protein.

The protein resides in the virion. Its function is as follows. One of the minor capsid proteins that constitute a network internal to the major capsid proteins and outside the lipid membrane. The minor capsid proteins glue and stabilize the capsomers. In Chlorella (PBCV-1), this protein is Minor capsid protein P4.